The following is an 89-amino-acid chain: Small ribosomal subunit protein uS15 (89 aa).

It belongs to the universal ribosomal protein uS15 family. As to quaternary structure, part of the 30S ribosomal subunit. Forms a bridge to the 50S subunit in the 70S ribosome, contacting the 23S rRNA.

Functionally, one of the primary rRNA binding proteins, it binds directly to 16S rRNA where it helps nucleate assembly of the platform of the 30S subunit by binding and bridging several RNA helices of the 16S rRNA. Its function is as follows. Forms an intersubunit bridge (bridge B4) with the 23S rRNA of the 50S subunit in the ribosome. This Lacticaseibacillus casei (strain BL23) (Lactobacillus casei) protein is Small ribosomal subunit protein uS15.